Consider the following 101-residue polypeptide: Small ribosomal subunit protein uS14 (101 aa).

The protein belongs to the universal ribosomal protein uS14 family. In terms of assembly, part of the 30S ribosomal subunit. Contacts proteins S3 and S10.

Its function is as follows. Binds 16S rRNA, required for the assembly of 30S particles and may also be responsible for determining the conformation of the 16S rRNA at the A site. In Rhizobium johnstonii (strain DSM 114642 / LMG 32736 / 3841) (Rhizobium leguminosarum bv. viciae), this protein is Small ribosomal subunit protein uS14.